The primary structure comprises 426 residues: Phosphomethylpyrimidine synthase (426 aa).

Substrate-binding positions include Asn-65, Met-94, Tyr-123, His-162, 184–186 (SRG), 225–228 (DGMR), and Glu-264. Zn(2+) is bound at residue His-268. Tyr-291 is a binding site for substrate. Residue His-332 coordinates Zn(2+). Residues Cys-408, Cys-411, and Cys-415 each coordinate [4Fe-4S] cluster.

It belongs to the ThiC family. Requires [4Fe-4S] cluster as cofactor.

The catalysed reaction is 5-amino-1-(5-phospho-beta-D-ribosyl)imidazole + S-adenosyl-L-methionine = 4-amino-2-methyl-5-(phosphooxymethyl)pyrimidine + CO + 5'-deoxyadenosine + formate + L-methionine + 3 H(+). It functions in the pathway cofactor biosynthesis; thiamine diphosphate biosynthesis. Functionally, catalyzes the synthesis of the hydroxymethylpyrimidine phosphate (HMP-P) moiety of thiamine from aminoimidazole ribotide (AIR) in a radical S-adenosyl-L-methionine (SAM)-dependent reaction. This chain is Phosphomethylpyrimidine synthase, found in Methanococcus maripaludis (strain DSM 14266 / JCM 13030 / NBRC 101832 / S2 / LL).